Here is a 75-residue protein sequence, read N- to C-terminus: Bacteriocin lactococcin-A (75 aa).

Positions Met-1–Gly-21 are excised as a propeptide. The helical transmembrane segment at Ala-30 to Phe-52 threads the bilayer.

It localises to the secreted. It is found in the host cell membrane. In terms of biological role, kills Lactococci. The chain is Bacteriocin lactococcin-A (lcnA) from Lactococcus lactis subsp. cremoris (Streptococcus cremoris).